The sequence spans 228 residues: MPHAALSSLVLLSLATAIFADCPSSIWVQFQGSCYTFLQVTINVENIEDVRKQCTDHGADLVSIHNEEENAFILDTLQKRWKGPDDLLLGMFYDTDDASFKWFDQSNMTFDKWADEDGEDLVDTCGFLYAKTGEWRKGNCEMSSVTGTLCKTAIPYDKKYLSDNHILISTLVIASTVTLAVLGAVIWFLYRRSARSGFTSFSPAPQSPYSDGCALVVSEEDEYSVQLD.

Positions 1–20 (MPHAALSSLVLLSLATAIFA) are cleaved as a signal peptide. Residues 21–165 (DCPSSIWVQF…YDKKYLSDNH (145 aa)) are Extracellular-facing. The C-type lectin domain occupies 30 to 149 (FQGSCYTFLQ…CEMSSVTGTL (120 aa)). The N-linked (GlcNAc...) asparagine glycan is linked to N107. Residues C125 and C140 are joined by a disulfide bond. A helical transmembrane segment spans residues 166–186 (ILISTLVIASTVTLAVLGAVI). Over 187–228 (WFLYRRSARSGFTSFSPAPQSPYSDGCALVVSEEDEYSVQLD) the chain is Cytoplasmic.

It localises to the membrane. Its subcellular location is the cell projection. The protein localises to the filopodium. The protein resides in the cytoplasm. It is found in the cell cortex. It localises to the microvillus. Functionally, potential multifunctional C-type lectin receptor that may play roles in endocytosis and phagocytosis as well as in cell adhesion and migration. The protein is CD302 antigen (Cd302) of Rattus norvegicus (Rat).